The chain runs to 211 residues: Thymidylate kinase (211 aa).

ATP is bound at residue 11–18 (GPDGAGKT).

This sequence belongs to the thymidylate kinase family.

The enzyme catalyses dTMP + ATP = dTDP + ADP. Phosphorylation of dTMP to form dTDP in both de novo and salvage pathways of dTTP synthesis. This is Thymidylate kinase from Streptococcus equi subsp. equi (strain 4047).